The following is a 247-amino-acid chain: 1-(5-phosphoribosyl)-5-[(5-phosphoribosylamino)methylideneamino] imidazole-4-carboxamide isomerase (247 aa).

D8 functions as the Proton acceptor in the catalytic mechanism. The Proton donor role is filled by D130.

The protein belongs to the HisA/HisF family.

It localises to the cytoplasm. The catalysed reaction is 1-(5-phospho-beta-D-ribosyl)-5-[(5-phospho-beta-D-ribosylamino)methylideneamino]imidazole-4-carboxamide = 5-[(5-phospho-1-deoxy-D-ribulos-1-ylimino)methylamino]-1-(5-phospho-beta-D-ribosyl)imidazole-4-carboxamide. It participates in amino-acid biosynthesis; L-histidine biosynthesis; L-histidine from 5-phospho-alpha-D-ribose 1-diphosphate: step 4/9. The polypeptide is 1-(5-phosphoribosyl)-5-[(5-phosphoribosylamino)methylideneamino] imidazole-4-carboxamide isomerase (Stutzerimonas stutzeri (strain A1501) (Pseudomonas stutzeri)).